Reading from the N-terminus, the 190-residue chain is Putative resolvase R771 (190 aa).

The H-T-H motif DNA-binding region spans 11–30 (SSVLGVHQRTLYQWDKKGWI). The 130-residue stretch at 61 to 190 (LSICYVRVSS…RNGLKKYSNK (130 aa)) folds into the Resolvase/invertase-type recombinase catalytic domain. Residues 66–92 (VRVSSNNQKDDLERQIKFMKKKYPNHT) are a coiled coil. Catalysis depends on serine 69, which acts as the O-(5'-phospho-DNA)-serine intermediate.

This sequence belongs to the site-specific recombinase resolvase family.

Functionally, resolvase catalyzes the resolution (a site-specific recombination) of the cointegrated replicon to yield the final transposition products. The chain is Putative resolvase R771 from Acanthamoeba polyphaga (Amoeba).